Consider the following 125-residue polypeptide: S-adenosylmethionine decarboxylase proenzyme (125 aa).

Ser-71 serves as the catalytic Schiff-base intermediate with substrate; via pyruvic acid. Ser-71 is subject to Pyruvic acid (Ser); by autocatalysis. The active-site Proton acceptor; for processing activity is His-76. The active-site Proton donor; for catalytic activity is the Cys-91.

It belongs to the prokaryotic AdoMetDC family. Type 1 subfamily. As to quaternary structure, heterotetramer of two alpha and two beta chains arranged as a dimer of alpha/beta heterodimers. Pyruvate is required as a cofactor. Is synthesized initially as an inactive proenzyme. Formation of the active enzyme involves a self-maturation process in which the active site pyruvoyl group is generated from an internal serine residue via an autocatalytic post-translational modification. Two non-identical subunits are generated from the proenzyme in this reaction, and the pyruvate is formed at the N-terminus of the alpha chain, which is derived from the carboxyl end of the proenzyme. The post-translation cleavage follows an unusual pathway, termed non-hydrolytic serinolysis, in which the side chain hydroxyl group of the serine supplies its oxygen atom to form the C-terminus of the beta chain, while the remainder of the serine residue undergoes an oxidative deamination to produce ammonia and the pyruvoyl group blocking the N-terminus of the alpha chain.

The catalysed reaction is S-adenosyl-L-methionine + H(+) = S-adenosyl 3-(methylsulfanyl)propylamine + CO2. The protein operates within amine and polyamine biosynthesis; S-adenosylmethioninamine biosynthesis; S-adenosylmethioninamine from S-adenosyl-L-methionine: step 1/1. Catalyzes the decarboxylation of S-adenosylmethionine to S-adenosylmethioninamine (dcAdoMet), the propylamine donor required for the synthesis of the polyamines spermine and spermidine from the diamine putrescine. The protein is S-adenosylmethionine decarboxylase proenzyme of Pyrobaculum aerophilum (strain ATCC 51768 / DSM 7523 / JCM 9630 / CIP 104966 / NBRC 100827 / IM2).